The chain runs to 395 residues: Levanbiose-producing levanase (395 aa).

Asp1 is an active-site residue. Residues 59 to 60, 124 to 125, Glu173, and Trp261 each bind substrate; these read WT and RD.

The protein belongs to the glycosyl hydrolase 32 family.

It is found in the membrane. It carries out the reaction Hydrolysis of (2-&gt;6)-beta-D-fructofuranan, to remove successive disaccharide residues as levanbiose, i.e. 6-(beta-D-fructofuranosyl)-D-fructose, from the end of the chain.. Functionally, catalyzes the degradation of levan mainly into levanbiose (difructose). Can also hydrolyze inulin. This Geobacillus stearothermophilus (Bacillus stearothermophilus) protein is Levanbiose-producing levanase (levB).